Consider the following 375-residue polypeptide: Chaperone protein DnaJ 1 (375 aa).

Residues 4 to 68 form the J domain; sequence DYYAILGVER…EKRRIVDMGG (65 aa). The CR-type zinc finger occupies 127–209; the sequence is GTKKPITIDT…CGGDGRVRTQ (83 aa). Residues Cys-140, Cys-143, Cys-157, Cys-160, Cys-183, Cys-186, Cys-197, and Cys-200 each coordinate Zn(2+). CXXCXGXG motif repeat units lie at residues 140 to 147, 157 to 164, 183 to 190, and 197 to 204; these read CDRCEGTG, CSTCNGSG, CPTCRGTG, and CDKCGGDG.

It belongs to the DnaJ family. As to quaternary structure, homodimer. Zn(2+) serves as cofactor.

The protein localises to the cytoplasm. Functionally, participates actively in the response to hyperosmotic and heat shock by preventing the aggregation of stress-denatured proteins and by disaggregating proteins, also in an autonomous, DnaK-independent fashion. Unfolded proteins bind initially to DnaJ; upon interaction with the DnaJ-bound protein, DnaK hydrolyzes its bound ATP, resulting in the formation of a stable complex. GrpE releases ADP from DnaK; ATP binding to DnaK triggers the release of the substrate protein, thus completing the reaction cycle. Several rounds of ATP-dependent interactions between DnaJ, DnaK and GrpE are required for fully efficient folding. Also involved, together with DnaK and GrpE, in the DNA replication of plasmids through activation of initiation proteins. This chain is Chaperone protein DnaJ 1, found in Corynebacterium diphtheriae (strain ATCC 700971 / NCTC 13129 / Biotype gravis).